An 89-amino-acid polypeptide reads, in one-letter code: Small ribosomal subunit protein uS15 (89 aa).

The protein belongs to the universal ribosomal protein uS15 family. In terms of assembly, part of the 30S ribosomal subunit. Forms a bridge to the 50S subunit in the 70S ribosome, contacting the 23S rRNA.

Functionally, one of the primary rRNA binding proteins, it binds directly to 16S rRNA where it helps nucleate assembly of the platform of the 30S subunit by binding and bridging several RNA helices of the 16S rRNA. Forms an intersubunit bridge (bridge B4) with the 23S rRNA of the 50S subunit in the ribosome. This is Small ribosomal subunit protein uS15 from Pseudomonas aeruginosa (strain LESB58).